The chain runs to 323 residues: tRNA U34 carboxymethyltransferase (323 aa).

Carboxy-S-adenosyl-L-methionine contacts are provided by residues K91, W105, K110, G130, 181-182 (IE), M196, Y200, and R315.

The protein belongs to the class I-like SAM-binding methyltransferase superfamily. CmoB family. Homotetramer.

It carries out the reaction carboxy-S-adenosyl-L-methionine + 5-hydroxyuridine(34) in tRNA = 5-carboxymethoxyuridine(34) in tRNA + S-adenosyl-L-homocysteine + H(+). Functionally, catalyzes carboxymethyl transfer from carboxy-S-adenosyl-L-methionine (Cx-SAM) to 5-hydroxyuridine (ho5U) to form 5-carboxymethoxyuridine (cmo5U) at position 34 in tRNAs. This Yersinia pseudotuberculosis serotype O:1b (strain IP 31758) protein is tRNA U34 carboxymethyltransferase.